A 386-amino-acid polypeptide reads, in one-letter code: 17-hydroxy-3-oxo-4-pregnene-20-carboxyl-CoA lyase (386 aa).

Tyr-292 serves as the catalytic Proton acceptor. The active-site Proton donor is the Tyr-342.

Belongs to the thiolase-like superfamily. As to quaternary structure, homodimer. Interacts with the ChsH1/ChsH2 hydratase via the DUF35 C-terminal region of ChsH2 (ChsH2-DUF35). The ChsH1-ChsH2-Ltp2 protein complex is composed of two protomers that form a heterohexameric structure through the Ltp2 dimerization interface.

It catalyses the reaction 17-hydroxy-3-oxochol-4-en-22-oyl-CoA = androst-4-ene-3,17-dione + propanoyl-CoA. It participates in steroid metabolism; cholesterol degradation. Functionally, involved in cholesterol side chain degradation. When associated with the ChsH1/ChsH2 hydratase, catalyzes the retroaldol cleavage of 17-hydroxy-3-oxo-4-pregnene-20-carboxyl-CoA (17-HOPC-CoA) produced by the hydratase, forming androst-4-ene-3,17-dione and propionyl-CoA. This Mycobacterium tuberculosis (strain ATCC 25618 / H37Rv) protein is 17-hydroxy-3-oxo-4-pregnene-20-carboxyl-CoA lyase.